We begin with the raw amino-acid sequence, 319 residues long: UDP-3-O-acylglucosamine N-acyltransferase (319 aa).

His-230 acts as the Proton acceptor in catalysis.

Belongs to the transferase hexapeptide repeat family. LpxD subfamily. Homotrimer.

The catalysed reaction is a UDP-3-O-[(3R)-3-hydroxyacyl]-alpha-D-glucosamine + a (3R)-hydroxyacyl-[ACP] = a UDP-2-N,3-O-bis[(3R)-3-hydroxyacyl]-alpha-D-glucosamine + holo-[ACP] + H(+). Its pathway is bacterial outer membrane biogenesis; LPS lipid A biosynthesis. In terms of biological role, catalyzes the N-acylation of UDP-3-O-acylglucosamine using 3-hydroxyacyl-ACP as the acyl donor. Is involved in the biosynthesis of lipid A, a phosphorylated glycolipid that anchors the lipopolysaccharide to the outer membrane of the cell. The protein is UDP-3-O-acylglucosamine N-acyltransferase of Campylobacter lari (strain RM2100 / D67 / ATCC BAA-1060).